A 128-amino-acid polypeptide reads, in one-letter code: Probable 4-amino-4-deoxy-L-arabinose-phosphoundecaprenol flippase subunit ArnF (128 aa).

The Cytoplasmic portion of the chain corresponds to 1-2; sequence MG. A helical transmembrane segment spans residues 3-23; the sequence is LMWGLFSVIIASAAQLSMGFA. At 24-35 the chain is on the periplasmic side; it reads ASHLPPMTHLWD. Residues 36–56 traverse the membrane as a helical segment; that stretch reads FIAALLAFGLDARILLLGLLG. Topologically, residues 57–76 are cytoplasmic; sequence YLLSVFCWYKTLHKLALSKA. The helical transmembrane segment at 77-97 threads the bilayer; the sequence is YALLSMSYVLVWIASMVLPGW. Topologically, residues 98 to 100 are periplasmic; that stretch reads EGT. A helical transmembrane segment spans residues 101 to 121; it reads FSLKALLGVACIMSGLMLIFL. Residues 122–128 are Cytoplasmic-facing; that stretch reads PTTKQRY.

Belongs to the ArnF family. As to quaternary structure, heterodimer of ArnE and ArnF.

It localises to the cell inner membrane. Its pathway is bacterial outer membrane biogenesis; lipopolysaccharide biosynthesis. Its function is as follows. Translocates 4-amino-4-deoxy-L-arabinose-phosphoundecaprenol (alpha-L-Ara4N-phosphoundecaprenol) from the cytoplasmic to the periplasmic side of the inner membrane. The chain is Probable 4-amino-4-deoxy-L-arabinose-phosphoundecaprenol flippase subunit ArnF from Escherichia coli O45:K1 (strain S88 / ExPEC).